A 342-amino-acid chain; its full sequence is Metalloendoproteinase 4-MMP (342 aa).

A signal peptide spans 1–34; sequence MHHHHHPCNRKPFTTIFSFFLLYLNLHNQQIIEA. The propeptide at 35–124 is activation peptide; sequence RNPSQFTTNP…KTAPFHTGKK (90 aa). Residues 104 to 111 carry the Cysteine switch motif; the sequence is PRCGFPDD. Zn(2+) contacts are provided by cysteine 106 and histidine 252. Glutamate 253 is an active-site residue. Zn(2+) is bound by residues histidine 256 and histidine 262. Asparagine 300 carries N-linked (GlcNAc...) asparagine glycosylation. The GPI-anchor amidated aspartate moiety is linked to residue aspartate 317. Residues 318–342 constitute a propeptide, removed in mature form; the sequence is GSRIRSQGMIYSTLSTVIALCFLNW.

This sequence belongs to the peptidase M10A family. Matrix metalloproteinases (MMPs) subfamily. The cofactor is Zn(2+). As to expression, mostly expressed in flowers and stems, and, to a lower extent, in leaves and roots.

The protein resides in the cell membrane. With respect to regulation, repressed by acetohydroxamic acid (AHA). Functionally, matrix metalloproteinases (MMPs) or matrixins may play a role in the degradation and remodeling of the extracellular matrix (ECM) during development or in response to stresses. Active on myelin basic protein (MBP) and, to some extent, on McaPLGLDpaAR-NH(2) (QF24) and beta-casein. The polypeptide is Metalloendoproteinase 4-MMP (Arabidopsis thaliana (Mouse-ear cress)).